A 677-amino-acid polypeptide reads, in one-letter code: Sulfate transporter 2.1 (677 aa).

Residues 1–118 are Cytoplasmic-facing; sequence MKERDSESFE…NYKLTMFKND (118 aa). The segment at 23–54 is disordered; it reads STHMIQMAMANSGSSAAAQAGQDQPDRSKWLL. Positions 28 to 44 are enriched in low complexity; sequence QMAMANSGSSAAAQAGQ. Residues 119–139 form a helical membrane-spanning segment; the sequence is LMAGLTLASLCIPQSIGYATL. Residues 140 to 141 are Extracellular-facing; that stretch reads AK. A helical transmembrane segment spans residues 142 to 162; the sequence is LDPQYGLYTSVVPPLIYALMG. At 163 to 166 the chain is on the cytoplasmic side; that stretch reads TSRE. Residues 167–187 traverse the membrane as a helical segment; it reads IAIGPVAVVSLLISSMLQKLI. The Extracellular portion of the chain corresponds to 188–198; that stretch reads DPETDPLGYKK. Residues 199–219 traverse the membrane as a helical segment; sequence LVLTTTFFAGIFQASFGLFRL. At 220-221 the chain is on the cytoplasmic side; the sequence is GF. Residues 222 to 242 traverse the membrane as a helical segment; sequence LVDFLSHAAIVGFMGGAAIVI. Topologically, residues 243–278 are extracellular; the sequence is GLQQLKGLLGITNFTTNTDIVSVLRAVWRSCQQQWS. An N-linked (GlcNAc...) asparagine glycan is attached at Asn255. Residues 279–299 form a helical membrane-spanning segment; it reads PHTFILGCSFLSFILITRFIG. At 300–304 the chain is on the cytoplasmic side; sequence KKYKK. The chain crosses the membrane as a helical span at residues 305–325; sequence LFWLPAIAPLIAVVVSTLMVF. Over 326-360 the chain is Extracellular; it reads LTKADEHGVKTVRHIKGGLNPMSIQDLDFNTPHLG. A helical transmembrane segment spans residues 361-381; it reads QIAKIGLIIAIVALTEAIAVG. The Cytoplasmic portion of the chain corresponds to 382 to 397; sequence RSFAGIKGYRLDGNKE. Residues 398–418 traverse the membrane as a helical segment; the sequence is MVAIGFMNVLGSFTSCYAATG. The Extracellular portion of the chain corresponds to 419–426; it reads SFSRTAVN. Residues 427–447 traverse the membrane as a helical segment; that stretch reads FAAGCETAMSNIVMAVTVFVA. Residues 448–454 lie on the Cytoplasmic side of the membrane; the sequence is LECLTRL. A helical transmembrane segment spans residues 455–475; it reads LYYTPIAILASIILSALPGLI. At 476–490 the chain is on the extracellular side; the sequence is NINEAIHIWKVDKFD. A helical transmembrane segment spans residues 491–511; sequence FLALIGAFFGVLFASVEIGLL. Over 512–677 the chain is Cytoplasmic; it reads VAVVISFAKI…ALDACFGLKV (166 aa). The STAS domain occupies 548–672; it reads YPMTVKTPGV…LTIGEALDAC (125 aa).

This sequence belongs to the SLC26A/SulP transporter (TC 2.A.53) family. Expressed in root cap, central cylinder of roots and in vascular tissues of leaves.

It is found in the membrane. Functionally, low-affinity H(+)/sulfate cotransporter that may be involved in root-to-shoot translocation of sulfate. Plays a central role in the regulation of sulfate assimilation. The sequence is that of Sulfate transporter 2.1 (SULTR2;1) from Arabidopsis thaliana (Mouse-ear cress).